Reading from the N-terminus, the 350-residue chain is MSKFVKKIKIIKPDDWHVHLRDNEILNQVIKYTGKFYKRAVIMPNLNSPITSCLKSIAYRNRILKSMHLNYKFKPLMTCYLTNSTSPKELEFGFSKKIFVAAKFYPNGCTTNSKTGIKKISDITPVLECMEKIGMPLLIHGEEINQNIDIYDREAKFIEKTLDPLRKKFPKLKIVLEHITTKESVEYIKNNDVNYLSATITPHHLMLNRNDMFYGGIQPYLYCLPILKKNKHRMALRKAISNGDKHFFLGSDTAPHLHKNKINMLGCAGIFNAPSSLLSYVKVFEEMRALKHLQSFCSENGPKFYNMPINKETITIIKKPCKIIKKINIGRNVIIPFLSGEILNWSIESD.

Zn(2+) contacts are provided by histidine 17 and histidine 19. Substrate contacts are provided by residues 19 to 21 and asparagine 45; that span reads HLR. Lysine 103, histidine 140, and histidine 178 together coordinate Zn(2+). Residue lysine 103 is modified to N6-carboxylysine. Histidine 140 serves as a coordination point for substrate. Leucine 224 contacts substrate. Residue aspartate 252 coordinates Zn(2+). The active site involves aspartate 252. 2 residues coordinate substrate: histidine 256 and alanine 268.

The protein belongs to the metallo-dependent hydrolases superfamily. DHOase family. Class II DHOase subfamily. As to quaternary structure, homodimer. The cofactor is Zn(2+).

The catalysed reaction is (S)-dihydroorotate + H2O = N-carbamoyl-L-aspartate + H(+). Its pathway is pyrimidine metabolism; UMP biosynthesis via de novo pathway; (S)-dihydroorotate from bicarbonate: step 3/3. Functionally, catalyzes the reversible cyclization of carbamoyl aspartate to dihydroorotate. This Buchnera aphidicola subsp. Acyrthosiphon pisum (strain 5A) protein is Dihydroorotase.